We begin with the raw amino-acid sequence, 482 residues long: MFS-type transporter cnsL (482 aa).

Residues 73 to 93 (LFVCATLSGLDKTAISAAAVY) form a helical membrane-spanning segment. An N-linked (GlcNAc...) asparagine glycan is attached at asparagine 100. Helical transmembrane passes span 108-128 (WIGSAPFFGGLLFMGPLAYCL), 131-151 (VPAVPFFAFNVLCWGILEMSV), 170-190 (IILNVVAPIINGFVAWVVGYY), 199-219 (IIFLLVGALTIVTSVVVYFVL), 304-324 (LLAMPPGAMSTLSGIGLSYLA), 333-353 (AIVTVSILLPLFGAVLCYALP), 361-381 (LVGLYILYTYWAPYVTLVSVY), 392-412 (ITLYAWFYIAWATGNIIGPQT), and 426-446 (VAMIICYVVAMFAITAYGVVC).

It belongs to the major facilitator superfamily. Allantoate permease family.

The protein localises to the cell membrane. Functionally, MFS-type transporter; part of the gene cluster that mediates the biosynthesis of communesins, a prominent class of indole alkaloids with great potential as pharmaceuticals. With the MFS transporter cnsO, is most likely responsible for cummunesins secretion and thereby may contribute to intrinsic resistance. This Penicillium expansum (Blue mold rot fungus) protein is MFS-type transporter cnsL.